The chain runs to 374 residues: Putative phosphoserine aminotransferase (374 aa).

Arg48 lines the L-glutamate pocket. Pyridoxal 5'-phosphate-binding positions include 82–83, Phe106, Thr152, Asp174, and Gln197; that span reads AT. Lys198 carries the post-translational modification N6-(pyridoxal phosphate)lysine. Residue 249–250 coordinates pyridoxal 5'-phosphate; that stretch reads NT.

Belongs to the class-V pyridoxal-phosphate-dependent aminotransferase family. SerC subfamily. Homodimer. Pyridoxal 5'-phosphate serves as cofactor.

The protein resides in the cytoplasm. The enzyme catalyses O-phospho-L-serine + 2-oxoglutarate = 3-phosphooxypyruvate + L-glutamate. The catalysed reaction is 4-(phosphooxy)-L-threonine + 2-oxoglutarate = (R)-3-hydroxy-2-oxo-4-phosphooxybutanoate + L-glutamate. It participates in amino-acid biosynthesis; L-serine biosynthesis; L-serine from 3-phospho-D-glycerate: step 2/3. Its pathway is cofactor biosynthesis; pyridoxine 5'-phosphate biosynthesis; pyridoxine 5'-phosphate from D-erythrose 4-phosphate: step 3/5. In terms of biological role, catalyzes the reversible conversion of 3-phosphohydroxypyruvate to phosphoserine and of 3-hydroxy-2-oxo-4-phosphonooxybutanoate to phosphohydroxythreonine. This Mycobacterium avium (strain 104) protein is Putative phosphoserine aminotransferase.